The primary structure comprises 793 residues: DnaJ homolog subfamily C member 10 (793 aa).

An N-terminal signal peptide occupies residues 1-32 (MGVWLSKDDYIRDLKRIILCFLIVYMAILVGT). A J domain is found at 35-100 (DFYSLLGVSK…DLRKKYDKYG (66 aa)). In terms of domain architecture, Thioredoxin 1 spans 130–232 (EIITLERREF…ESLVSFAMQH (103 aa)). Cys-158 and Cys-161 are joined by a disulfide. Trxb regions lie at residues 235 to 350 (STVT…LPDF) and 348 to 463 (PDFE…PQNF). 3 consecutive Thioredoxin domains span residues 454 to 553 (HVTT…IEDL), 557 to 662 (SVVS…SLRI), and 671 to 778 (VSTG…INEK). A disulfide bridge connects residues Cys-480 and Cys-483. Asn-530 carries N-linked (GlcNAc...) asparagine glycosylation. 2 disulfides stabilise this stretch: Cys-588–Cys-591 and Cys-700–Cys-703. The Prevents secretion from ER signature appears at 790–793 (KDEL).

As to quaternary structure, interacts with HSPA5 (via its J domain). Interacts with EDEM1.

The protein resides in the endoplasmic reticulum lumen. Functionally, endoplasmic reticulum disulfide reductase involved both in the correct folding of proteins and degradation of misfolded proteins. Required for efficient folding of proteins in the endoplasmic reticulum by catalyzing the removal of non-native disulfide bonds formed during the folding of proteins, such as LDLR. Also involved in endoplasmic reticulum-associated degradation (ERAD) by reducing incorrect disulfide bonds in misfolded glycoproteins recognized by EDEM1. Interaction with HSPA5 is required its activity, not for the disulfide reductase activity, but to facilitate the release of DNAJC10 from its substrate. Promotes apoptotic signaling pathway in response to endoplasmic reticulum stress. The protein is DnaJ homolog subfamily C member 10 (DNAJC10) of Pongo abelii (Sumatran orangutan).